The primary structure comprises 465 residues: Midnolin (465 aa).

One can recognise a Ubiquitin-like domain in the interval 32–106 (MSLAIHSTTG…LTLVPTVEAG (75 aa)). Disordered stretches follow at residues 185–262 (SVAT…SRKP) and 400–445 (RLRR…GLDF). 2 stretches are compositionally biased toward low complexity: residues 195–219 (RPVS…PSPV) and 240–257 (SPPA…SPTP). The required for nucleolar localization stretch occupies residues 397-424 (QQKRLRRKARRDARGPYHWTPSRKAGRS).

Interacts with GCK; the interaction occurs preferentially at low glucose levels. Interacts with the proteasome. In terms of tissue distribution, expressed at high levels in brain and liver with significantly lower levels in muscle.

It is found in the nucleus. The protein resides in the cytoplasm. The protein localises to the cytosol. Its subcellular location is the nucleolus. Its function is as follows. Facilitates the ubiquitin-independent proteasomal degradation of stimulus-induced transcription factors such as FOSB, EGR1, NR4A1, and IRF4 to the proteasome for degradation. Promotes also the degradation of other substrates such as CBX4. Plays a role in inhibiting the activity of glucokinase GCK and both glucose-induced and basal insulin secretion. This is Midnolin (Midn) from Mus musculus (Mouse).